The chain runs to 340 residues: Protein-tyrosine-phosphatase PTP1 (340 aa).

A Tyrosine-protein phosphatase domain is found at 58 to 326; sequence IAHEFTGLQA…FFCYNAIVDE (269 aa). Substrate is bound by residues Asp-234, 265 to 271, and Gln-311; that span reads CSAGIGR. The active-site Phosphocysteine intermediate is the Cys-265.

In terms of assembly, interacts with MPK6. Interacts with KIN10. In terms of processing, phosphorylated by KIN10. As to expression, expressed in roots, stems and flowers, and at low levels in leaves.

It is found in the cytoplasm. The protein localises to the cytosol. The protein resides in the nucleus. It carries out the reaction O-phospho-L-tyrosyl-[protein] + H2O = L-tyrosyl-[protein] + phosphate. Its activity is regulated as follows. Inhibited by hydrogen peroxide. Functionally, protein-tyrosine-phosphatase that dephosphorylates and probably inhibits MPK6 in non-oxidative stress conditions. In association with MKP1, represses salicylic acid (SA) and camalexin biosynthesis, thus modulating defense response. May also repress MPK3. Dephosphorylates and inactivates MPK4 in vitro. The polypeptide is Protein-tyrosine-phosphatase PTP1 (PTP1) (Arabidopsis thaliana (Mouse-ear cress)).